The following is a 347-amino-acid chain: Toluene-4-sulfonate monooxygenase system iron-sulfur subunit TsaM1 (347 aa).

Positions 7–109 constitute a Rieske domain; it reads WYVAAWDTEI…VVERNRLVWI (103 aa). Cysteine 48, histidine 50, cysteine 67, and histidine 70 together coordinate [2Fe-2S] cluster.

In terms of assembly, homotetramer. Part of the p-toluenesulfonate methyl-monooxygenase complex TsaBM, comprising the reductase TsaB and the oxygenase TsaM. Requires [2Fe-2S] cluster as cofactor.

It catalyses the reaction toluene-4-sulfonate + NADH + O2 + H(+) = 4-(hydroxymethyl)benzenesulfonate + NAD(+) + H2O. Functionally, involved in the toluene-4-sulfonate degradation pathway. Does not discriminate between the sulfonate and the carboxyl substituents and can also be involved in the p-toluenecarboxylate degradation pathway. Can use toluene-4-sulfonate, p-toluate, m-toluate and 4-ethylbenzoate as substrates, but not p-xylene, toluene and p-cresol. Also catalyzes the demethylation of 4-methoxybenzoate to 4-hydroxybenzoate. The sequence is that of Toluene-4-sulfonate monooxygenase system iron-sulfur subunit TsaM1 (tsaM1) from Comamonas testosteroni (Pseudomonas testosteroni).